The following is a 963-amino-acid chain: MAVFPWHSRNRNYKAEFASCRLEAVPLEFGDYHPLKPITVTESKTKKVNRKGSTSSTSSSSSSSVVDPLSSVLDGTDPLSMFAATADPAALAAAMDSSRRKRDRDDNSVVGSDFEPWTNKRGEILARYTTTEKLSINLFMGSEKGKAGTATLAMSEKVRTRLEELDDFEEGSQKELLNLTQQDYVNRIEELNQSLKDAWASDQKVKALKIVIQCSKLLSDTSVIQFYPSKFVLITDILDTFGKLVYERIFSMCVDSRSVLPDHFSPENANDTAKETCLNWFFKIASIRELIPRFYVEASILKCNKFLSKTGISECLPRLTCMIRGIGDPLVSVYARAYLCRVGMEVAPHLKETLNKNFFDFLLTFKQIHGDTVQNQLVVQGVELPSYLPLYPPAMDWIFQCISYHAPEALLTEMMERCKKLGNNALLLNSVMSAFRAEFIATRSMDFIGMIKECDESGFPKHLLFRSLGLNLALADPPESDRLQILNEAWKVITKLKNPQDYINCAEVWVEYTCKHFTKREVNTVLADVIKHMTPDRAFEDSYPQLQLIIKKVIAHFHDFSVLFSVEKFLPFLDMFQKESVRVEVCKCIMDAFIKHQQEPTKDPVILNALLHVCKTMHDSVNALTLEDEKRMLSYLINGFIKMVSFGRDFEQQLSFYVESRSMFCNLEPVLVQLIHSVNRLAMETRKVMKGNHSRKTAAFVRACVAYCFITIPSLAGIFTRLNLYLHSGQVALANQCLSQADAFFKAAISLVPEVPKMINIDGKMRPSESFLLEFLCNFFSTLLIVPDHPEHGVLFLVRELLNVIQDYTWEDNSDEKIRIYTCVLHLLSAMSQETYLYHIDKVDSNDSLYGGDSKFLAENNKLCETVMAQILEHLKTLAKDEALKRQSSLGLSFFNSILAHGDLRNNKLNQLSVNLWHLAQRHGCADTRTMVKTLEYIKKQSKQPDMTHLTELALRLPLQTRT.

The segment at 43–69 is disordered; the sequence is SKTKKVNRKGSTSSTSSSSSSSVVDPL. Positions 53–69 are enriched in low complexity; that stretch reads STSSTSSSSSSSVVDPL. Ser265 is modified (phosphoserine). Residues 703-719 form a helical membrane-spanning segment; sequence ACVAYCFITIPSLAGIF.

The protein belongs to the VPS35L family. In terms of assembly, component of the heterotrimeric retriever complex formed by VPS26C, VPS29 and VPS35L. Interacts with VPS29. Interacts with COMMD1, CCDC93 and CCDC22; associates with the CCC (COMMD/CCDC22/CCDC93) complex which contains at least COMMD1 (and possibly other COMM domain-containing proteins), CCDC22 and CCDC93. Interacts with WASHC1, WASHC2A and WASHC2C. Interacts with SNX17 and SNX31.

The protein resides in the membrane. It is found in the endosome. Functionally, acts as a component of the retriever complex. The retriever complex is a heterotrimeric complex related to retromer cargo-selective complex (CSC) and essential for retromer-independent retrieval and recycling of numerous cargos such as integrin alpha-5/beta-1 (ITGA5:ITGB1). The recruitment of the retriever complex to the endosomal membrane involves CCC and WASH complexes. In the endosomes, drives the retrieval and recycling of NxxY-motif-containing cargo proteins by coupling to SNX17, a cargo essential for the homeostatic maintenance of numerous cell surface proteins associated with processes that include cell migration, cell adhesion, nutrient supply and cell signaling. Involved in copper-dependent ATP7A trafficking between the trans-Golgi network and vesicles in the cell periphery; the function is proposed to depend on its association with the CCC complex and cooperation with the WASH complex on early endosomes. Seems not to be required for CCC complex stability. In terms of biological role, (Microbial infection) The heterotrimeric retriever complex, in collaboration with the CCC complex, mediates the exit of human papillomavirus to the cell surface. This is VPS35 endosomal protein-sorting factor-like from Homo sapiens (Human).